A 143-amino-acid polypeptide reads, in one-letter code: Nucleoside diphosphate kinase (143 aa).

ATP is bound by residues lysine 11, phenylalanine 59, arginine 87, threonine 93, arginine 104, and asparagine 114. Catalysis depends on histidine 117, which acts as the Pros-phosphohistidine intermediate.

Belongs to the NDK family. In terms of assembly, homotetramer. The cofactor is Mg(2+).

It localises to the cytoplasm. It catalyses the reaction a 2'-deoxyribonucleoside 5'-diphosphate + ATP = a 2'-deoxyribonucleoside 5'-triphosphate + ADP. The catalysed reaction is a ribonucleoside 5'-diphosphate + ATP = a ribonucleoside 5'-triphosphate + ADP. In terms of biological role, major role in the synthesis of nucleoside triphosphates other than ATP. The ATP gamma phosphate is transferred to the NDP beta phosphate via a ping-pong mechanism, using a phosphorylated active-site intermediate. The protein is Nucleoside diphosphate kinase of Colwellia psychrerythraea (strain 34H / ATCC BAA-681) (Vibrio psychroerythus).